The sequence spans 180 residues: Translation initiation factor IF-3 (180 aa).

The protein belongs to the IF-3 family. As to quaternary structure, monomer.

Its subcellular location is the cytoplasm. In terms of biological role, IF-3 binds to the 30S ribosomal subunit and shifts the equilibrium between 70S ribosomes and their 50S and 30S subunits in favor of the free subunits, thus enhancing the availability of 30S subunits on which protein synthesis initiation begins. This Shewanella oneidensis (strain ATCC 700550 / JCM 31522 / CIP 106686 / LMG 19005 / NCIMB 14063 / MR-1) protein is Translation initiation factor IF-3.